A 492-amino-acid polypeptide reads, in one-letter code: N-succinylglutamate 5-semialdehyde dehydrogenase (492 aa).

220 to 225 (GSANTG) is a binding site for NAD(+). Residues Glu243 and Cys277 contribute to the active site.

The protein belongs to the aldehyde dehydrogenase family. AstD subfamily.

The catalysed reaction is N-succinyl-L-glutamate 5-semialdehyde + NAD(+) + H2O = N-succinyl-L-glutamate + NADH + 2 H(+). The protein operates within amino-acid degradation; L-arginine degradation via AST pathway; L-glutamate and succinate from L-arginine: step 4/5. Catalyzes the NAD-dependent reduction of succinylglutamate semialdehyde into succinylglutamate. The sequence is that of N-succinylglutamate 5-semialdehyde dehydrogenase from Escherichia coli (strain ATCC 8739 / DSM 1576 / NBRC 3972 / NCIMB 8545 / WDCM 00012 / Crooks).